Consider the following 176-residue polypeptide: Crossover junction endodeoxyribonuclease RuvC (176 aa).

Active-site residues include Asp8, Glu69, and Asp141. Mg(2+) contacts are provided by Asp8, Glu69, and Asp141.

Belongs to the RuvC family. In terms of assembly, homodimer which binds Holliday junction (HJ) DNA. The HJ becomes 2-fold symmetrical on binding to RuvC with unstacked arms; it has a different conformation from HJ DNA in complex with RuvA. In the full resolvosome a probable DNA-RuvA(4)-RuvB(12)-RuvC(2) complex forms which resolves the HJ. Mg(2+) serves as cofactor.

It localises to the cytoplasm. It catalyses the reaction Endonucleolytic cleavage at a junction such as a reciprocal single-stranded crossover between two homologous DNA duplexes (Holliday junction).. Functionally, the RuvA-RuvB-RuvC complex processes Holliday junction (HJ) DNA during genetic recombination and DNA repair. Endonuclease that resolves HJ intermediates. Cleaves cruciform DNA by making single-stranded nicks across the HJ at symmetrical positions within the homologous arms, yielding a 5'-phosphate and a 3'-hydroxyl group; requires a central core of homology in the junction. The consensus cleavage sequence is 5'-(A/T)TT(C/G)-3'. Cleavage occurs on the 3'-side of the TT dinucleotide at the point of strand exchange. HJ branch migration catalyzed by RuvA-RuvB allows RuvC to scan DNA until it finds its consensus sequence, where it cleaves and resolves the cruciform DNA. In Pseudomonas syringae pv. tomato (strain ATCC BAA-871 / DC3000), this protein is Crossover junction endodeoxyribonuclease RuvC.